A 152-amino-acid chain; its full sequence is Flagellar basal-body rod protein FlgC (152 aa).

This sequence belongs to the flagella basal body rod proteins family. In terms of assembly, the basal body constitutes a major portion of the flagellar organelle and consists of four rings (L,P,S, and M) mounted on a central rod. The rod consists of about 26 subunits of FlgG in the distal portion, and FlgB, FlgC and FlgF are thought to build up the proximal portion of the rod with about 6 subunits each.

It is found in the bacterial flagellum basal body. In Borreliella burgdorferi (strain ATCC 35210 / DSM 4680 / CIP 102532 / B31) (Borrelia burgdorferi), this protein is Flagellar basal-body rod protein FlgC (flgC).